Here is a 313-residue protein sequence, read N- to C-terminus: Cytosolic Fe-S cluster assembly factor NUBP1 homolog (313 aa).

The disordered stretch occupies residues 1–25; it reads MSDVPDDANAGCPGTGSAGAGKASG. The [4Fe-4S] cluster site is built by Cys12, Cys26, Cys29, and Cys35. Position 66 to 73 (66 to 73) interacts with ATP; the sequence is GKGGVGKS. Positions 240 and 243 each coordinate [4Fe-4S] cluster.

Belongs to the Mrp/NBP35 ATP-binding proteins family. NUBP1/NBP35 subfamily. In terms of assembly, heterotetramer of 2 NUBP1 and 2 NUBP2 chains. [4Fe-4S] cluster serves as cofactor. Expressed in head amphid and labial ciliated sensory neurons and tail phasmid ciliated chemosensory neurons.

It is found in the cytoplasm. Its subcellular location is the cell projection. Component of the cytosolic iron-sulfur (Fe/S) protein assembly (CIA) machinery. Required for maturation of extramitochondrial Fe-S proteins. The NUBP1-NUBP2 heterotetramer forms a Fe-S scaffold complex, mediating the de novo assembly of an Fe-S cluster and its transfer to target apoproteins. Regulates cilium formation and structure. The chain is Cytosolic Fe-S cluster assembly factor NUBP1 homolog from Caenorhabditis elegans.